The primary structure comprises 345 residues: Methylthioribose-1-phosphate isomerase (345 aa).

Residues 44–46 (RGA), Arg-87, and Gln-194 contribute to the substrate site. Residue Asp-235 is the Proton donor of the active site. 245–246 (NK) lines the substrate pocket.

It belongs to the eIF-2B alpha/beta/delta subunits family. MtnA subfamily.

The enzyme catalyses 5-(methylsulfanyl)-alpha-D-ribose 1-phosphate = 5-(methylsulfanyl)-D-ribulose 1-phosphate. It functions in the pathway amino-acid biosynthesis; L-methionine biosynthesis via salvage pathway; L-methionine from S-methyl-5-thio-alpha-D-ribose 1-phosphate: step 1/6. Functionally, catalyzes the interconversion of methylthioribose-1-phosphate (MTR-1-P) into methylthioribulose-1-phosphate (MTRu-1-P). The protein is Methylthioribose-1-phosphate isomerase of Heliobacterium modesticaldum (strain ATCC 51547 / Ice1).